The sequence spans 571 residues: MVKISRQAYAEMFGPTTGDRVRLADTGLVIEVEKDFTIYGEEVKFGGGKVIRDGMGQSQRMAKDCVDTVITNALIVDHWGIVKADIGLKGGRIAAIGKAGNPDIQPGVTIVVGPGTEVIAGEGMIVTAGGIDTHIHFICPQQIEEALMSGVTTMIGGGTGPATGTFATTVTPGPWYMERMLQAIEAYPMNIGLLGKGNASQQAPILEQVEAGAIGLKLHEDWGTTPAAIDTCLSVADATDTQVAIHTDTLNEAGFVEATIAAFKGRTIHTYHTEGAGGGHAPDIIKVCGEANVLPSSTNPTRPYTVNTLDEHLDMLMVCHHLDPAIAEDIAFAESRIRRETIAAEDILHDLGAFSMISSDSQAMGRVGEVIIRTWQTAHKMAAQRGKLPGDPNDARGGHDNFRVKRYIAKYTINPALTHGIAHEVGSIEVGKWADLVLWRPACFGVKPSLILKGGMIAAAAMGDPNASIPTPQPVHYRPMFASAGGALHKSSLTFVSQAALAANVGERYGLAKTLSAVRGTRTVSKRDMVHNDWQPHVTVDPETYQVVADGQLLMCDPATELPMAQRYFLF.

Residues 129-571 form the Urease domain; it reads GGIDTHIHFI…LPMAQRYFLF (443 aa). His134, His136, and Lys217 together coordinate Ni(2+). Lys217 carries the post-translational modification N6-carboxylysine. Position 219 (His219) interacts with substrate. Ni(2+) is bound by residues His246 and His272. His320 (proton donor) is an active-site residue. Asp360 is a binding site for Ni(2+).

The protein belongs to the metallo-dependent hydrolases superfamily. Urease alpha subunit family. In terms of assembly, heterotrimer of UreA (gamma), UreB (beta) and UreC (alpha) subunits. Three heterotrimers associate to form the active enzyme. It depends on Ni cation as a cofactor. In terms of processing, carboxylation allows a single lysine to coordinate two nickel ions.

The protein localises to the cytoplasm. It carries out the reaction urea + 2 H2O + H(+) = hydrogencarbonate + 2 NH4(+). The protein operates within nitrogen metabolism; urea degradation; CO(2) and NH(3) from urea (urease route): step 1/1. The polypeptide is Urease subunit alpha (Cupriavidus pinatubonensis (strain JMP 134 / LMG 1197) (Cupriavidus necator (strain JMP 134))).